Consider the following 607-residue polypeptide: COMPASS component cclA (607 aa).

A compositionally biased stretch (low complexity) spans 1–19; sequence MASTHAAGSPAPSSSINSP. Disordered stretches follow at residues 1 to 22 and 34 to 86; these read MAST…PILH and GEGS…KSVA. Basic residues predominate over residues 57–69; sequence SKRNKRDSRKKRE. The 220-residue stretch at 157-376 folds into the B30.2/SPRY domain; sequence IADTDFPHIK…YAFNLKETPA (220 aa). A disordered region spans residues 587-607; the sequence is NTPITDVPVPPEPEDTPMTGG.

It belongs to the cclA family. In terms of assembly, component of the COMPASS complex.

It localises to the nucleus. The protein resides in the chromosome. Its subcellular location is the telomere. Its function is as follows. Component of the COMPASS (Set1C) complex that specifically mono-, di- and trimethylates histone H3 to form H3K4me1/2/3, which subsequently plays a role in telomere length maintenance and transcription elongation regulation. Controls the production of several secondary metabolites, including monodictyphenone, emodin and emodin derivatives, as well as two anti-osteoporosis polyketides, F9775A and F9775B. This Emericella nidulans (strain FGSC A4 / ATCC 38163 / CBS 112.46 / NRRL 194 / M139) (Aspergillus nidulans) protein is COMPASS component cclA.